We begin with the raw amino-acid sequence, 698 residues long: Polyribonucleotide nucleotidyltransferase (698 aa).

The Mg(2+) site is built by Asp485 and Asp491. Residues 552-612 (PRVEMMTIPE…SDLKGAKSIV (61 aa)) form the KH domain. Residues 622–690 (GMVYDGTVKK…KLGRLNLSYV (69 aa)) enclose the S1 motif domain.

It belongs to the polyribonucleotide nucleotidyltransferase family. The cofactor is Mg(2+).

It localises to the cytoplasm. It catalyses the reaction RNA(n+1) + phosphate = RNA(n) + a ribonucleoside 5'-diphosphate. In terms of biological role, involved in mRNA degradation. Catalyzes the phosphorolysis of single-stranded polyribonucleotides processively in the 3'- to 5'-direction. The protein is Polyribonucleotide nucleotidyltransferase of Treponema denticola (strain ATCC 35405 / DSM 14222 / CIP 103919 / JCM 8153 / KCTC 15104).